The primary structure comprises 547 residues: Glucose-6-phosphate isomerase (547 aa).

The active-site Proton donor is the E356. Active-site residues include H387 and K508.

Belongs to the GPI family.

The protein localises to the cytoplasm. The enzyme catalyses alpha-D-glucose 6-phosphate = beta-D-fructose 6-phosphate. It participates in carbohydrate biosynthesis; gluconeogenesis. It functions in the pathway carbohydrate degradation; glycolysis; D-glyceraldehyde 3-phosphate and glycerone phosphate from D-glucose: step 2/4. Functionally, catalyzes the reversible isomerization of glucose-6-phosphate to fructose-6-phosphate. The polypeptide is Glucose-6-phosphate isomerase (Cupriavidus taiwanensis (strain DSM 17343 / BCRC 17206 / CCUG 44338 / CIP 107171 / LMG 19424 / R1) (Ralstonia taiwanensis (strain LMG 19424))).